The chain runs to 164 residues: MIHDKTCPCGSQKIYQDCCQILHLGLDSGAQLATCPEQLMRSRYCAFVLKNFDYIIKTHHADFLEGLTLEQLQQGPHPEWLGLDVLSADDTTQSDGSKGGTVTFKAWYKMNGEIDAIYERSEFIFEQSRWFYTQGHQMHAKLPGRNDPCVCHSGKKFKQCCMKG.

Belongs to the UPF0225 family.

This is UPF0225 protein Shewmr7_1921 from Shewanella sp. (strain MR-7).